We begin with the raw amino-acid sequence, 330 residues long: MSAAATADTTSPHIPVLLPAILDAVAPVQGVWLDGTFGAGGYTRGLLEAGADRVIAVDRDPLAFEMAADWAGSYGTRLVQQPGVFSEMDTYAVALDGVVLDLGVSSMQLDLAERGFSFMRDGPLDMRMSQEGPSAADIVNEASAETLANILFQYGEERASRRIAKAILTERALAPITTTLHLAGIIERCLPRAKPGQSHPATRSFQALRIAVNDEYGELYQGLMAAERALKPGGQLAVVTFHSVEDRMVKRFLTARAGAGGNANRFAPEVQRDAPAFTLRSRKAIVADDAEVAANPRARSAKLRIAVRTQAPAGVIDAKSVGMPVVKVGN.

S-adenosyl-L-methionine-binding positions include 40–42, Asp-58, Phe-85, Asp-101, and Gln-108; that span reads GGY.

It belongs to the methyltransferase superfamily. RsmH family.

The protein localises to the cytoplasm. The enzyme catalyses cytidine(1402) in 16S rRNA + S-adenosyl-L-methionine = N(4)-methylcytidine(1402) in 16S rRNA + S-adenosyl-L-homocysteine + H(+). In terms of biological role, specifically methylates the N4 position of cytidine in position 1402 (C1402) of 16S rRNA. The protein is Ribosomal RNA small subunit methyltransferase H of Roseobacter denitrificans (strain ATCC 33942 / OCh 114) (Erythrobacter sp. (strain OCh 114)).